A 67-amino-acid chain; its full sequence is Coiled-coil domain-containing protein 179 (67 aa).

2 disordered regions span residues 1 to 32 (MCLR…RQSV) and 47 to 67 (RKLG…ILWT). Residues 27–53 (STRQSVEKRINYMQNLQKEKRKLGKRF) are a coiled coil.

The sequence is that of Coiled-coil domain-containing protein 179 (Ccdc179) from Mus musculus (Mouse).